Consider the following 149-residue polypeptide: Large ribosomal subunit protein uL13 (149 aa).

This sequence belongs to the universal ribosomal protein uL13 family. In terms of assembly, part of the 50S ribosomal subunit.

In terms of biological role, this protein is one of the early assembly proteins of the 50S ribosomal subunit, although it is not seen to bind rRNA by itself. It is important during the early stages of 50S assembly. The sequence is that of Large ribosomal subunit protein uL13 from Chlorobium limicola (strain DSM 245 / NBRC 103803 / 6330).